Consider the following 117-residue polypeptide: Immunoglobulin heavy variable 4-28 (117 aa).

The N-terminal stretch at 1–19 (MKHLWFFLLLVAAPRWVLS) is a signal peptide. The framework-1 stretch occupies residues 20-44 (QVQLQESGPGLVKPSDTLSLTCAVS). In terms of domain architecture, Ig-like spans 20-117 (QVQLQESGPG…VDTAVYYCAR (98 aa)). A disulfide bridge links Cys-41 with Cys-115. The segment at 45 to 53 (GYSISSSNW) is complementarity-determining-1. A framework-2 region spans residues 54-70 (WGWIRQPPGKGLEWIGY). Positions 71–77 (IYYSGST) are complementarity-determining-2. Residues 78-115 (YYNPSLKSRVTMSVDTSKNQFSLKLSSVTAVDTAVYYC) form a framework-3 region. The segment at 116 to 117 (AR) is complementarity-determining-3.

Immunoglobulins are composed of two identical heavy chains and two identical light chains; disulfide-linked.

Its subcellular location is the secreted. The protein localises to the cell membrane. In terms of biological role, v region of the variable domain of immunoglobulin heavy chains that participates in the antigen recognition. Immunoglobulins, also known as antibodies, are membrane-bound or secreted glycoproteins produced by B lymphocytes. In the recognition phase of humoral immunity, the membrane-bound immunoglobulins serve as receptors which, upon binding of a specific antigen, trigger the clonal expansion and differentiation of B lymphocytes into immunoglobulins-secreting plasma cells. Secreted immunoglobulins mediate the effector phase of humoral immunity, which results in the elimination of bound antigens. The antigen binding site is formed by the variable domain of one heavy chain, together with that of its associated light chain. Thus, each immunoglobulin has two antigen binding sites with remarkable affinity for a particular antigen. The variable domains are assembled by a process called V-(D)-J rearrangement and can then be subjected to somatic hypermutations which, after exposure to antigen and selection, allow affinity maturation for a particular antigen. In Homo sapiens (Human), this protein is Immunoglobulin heavy variable 4-28.